Consider the following 257-residue polypeptide: MVINKVEICGVNTSKLPVLKEKEMRELLISMRNGNTTAREKFIKGNLRLVLSVIQRFNNRGENADDLFQVGCIGLIKSIDNFDLSQNVKFSTYAVPMIIGEIRRYLRDNNSIRVSRSLRDIAYRALQVRDRLISKNNKEPTVSQIAKELKIPREEVIFALDAIQDPISLFEPIYHDDGDAIYVMDQISDNKNLDDSWLQNISIKEAMKKLSDREKMILNMRFFDGRTQMEVADEIGISQAQVSRLEKTALKHMKKYV.

Positions 66–79 (DLFQVGCIGLIKSI) match the Polymerase core binding motif. A DNA-binding region (H-T-H motif) is located at residues 228-247 (QMEVADEIGISQAQVSRLEK).

Belongs to the sigma-70 factor family.

Sigma factors are initiation factors that promote the attachment of RNA polymerase to specific initiation sites and are then released. This sigma factor is responsible for the expression of sporulation specific genes. The polypeptide is RNA polymerase sigma-G factor (sigG) (Clostridium acetobutylicum (strain ATCC 824 / DSM 792 / JCM 1419 / IAM 19013 / LMG 5710 / NBRC 13948 / NRRL B-527 / VKM B-1787 / 2291 / W)).